The primary structure comprises 730 residues: Protein folded gastrulation (730 aa).

The first 21 residues, 1–21, serve as a signal peptide directing secretion; sequence MSPPNCLLAVLALTVFIGANN. N-linked (GlcNAc...) asparagine glycans are attached at residues Asn-51 and Asn-193. Over residues 197–211 the composition is skewed to low complexity; that stretch reads TPETSTSITPTSTTT. The disordered stretch occupies residues 197-222; that stretch reads TPETSTSITPTSTTTFAVPSVPSGEA. 2 N-linked (GlcNAc...) asparagine glycosylation sites follow: Asn-252 and Asn-289. The segment covering 361-385 has biased composition (acidic residues); that stretch reads ELEEEVGEEEVTATDILPSEEDEYT. The interval 361-424 is disordered; that stretch reads ELEEEVGEEE…SPHPPEEPEI (64 aa). The span at 386–415 shows a compositional bias: low complexity; that stretch reads TETATTTGDTTVAEASMDTSTATSTSGQSS. Asn-459 is a glycosylation site (N-linked (GlcNAc...) asparagine). Disordered regions lie at residues 474-526 and 545-583; these read EDES…GGHK and KGKQRQQHQPQKQQLEPTSTEITSALTSTSTEDATTTTT. Residues 478-491 show a composition bias toward low complexity; the sequence is STTTATPEPSSSTP. Polar residues predominate over residues 504–513; sequence DNDNLMTNTI. Residues 567–583 show a composition bias toward low complexity; sequence TSALTSTSTEDATTTTT. Asn-590 and Asn-639 each carry an N-linked (GlcNAc...) asparagine glycan. Positions 663 to 676 are enriched in low complexity; sequence SAASTESAGTAATT. A disordered region spans residues 663 to 683; it reads SAASTESAGTAATTPNSSSNP. Asn-678 carries an N-linked (GlcNAc...) asparagine glycan.

May be highly O-glycosylated in its Ser/Thr-rich C-terminal part. In terms of tissue distribution, expressed in the invagination primordia in a pattern that precisely precedes the pattern of constrictions.

It localises to the secreted. Its subcellular location is the extracellular space. The protein resides in the extracellular matrix. Functionally, coordinates cell shape changes during formation of the ventral furrow and invagination of the posterior midgut primordium, by inducing apical constriction of cells in spatially and temporally defined manners. Could function as a secreted signal to initiate apical constriction by acting as a ligand for an unidentified G protein-coupled receptor, which in turn activates the G protein alpha subunit encoded by concertina, in neighboring cells. Such an intracellular pathway would ultimately induce contraction of the apical actin-myosin network. In the ventral furrow, fog appears to ensure that all the cells initiate constriction within several minutes of each other. In the posterior midgut invagination, fog appears to direct the ordered progression of constriction initiations out from a central region and also to delimit the peripheral extent of this spreading. The sequence is that of Protein folded gastrulation (fog) from Drosophila melanogaster (Fruit fly).